A 355-amino-acid polypeptide reads, in one-letter code: UDP-N-acetylglucosamine--N-acetylmuramyl-(pentapeptide) pyrophosphoryl-undecaprenol N-acetylglucosamine transferase (355 aa).

UDP-N-acetyl-alpha-D-glucosamine contacts are provided by residues T13–G15, N125, R162, S190, I244, and Q289.

The protein belongs to the glycosyltransferase 28 family. MurG subfamily.

It localises to the cell inner membrane. The enzyme catalyses di-trans,octa-cis-undecaprenyl diphospho-N-acetyl-alpha-D-muramoyl-L-alanyl-D-glutamyl-meso-2,6-diaminopimeloyl-D-alanyl-D-alanine + UDP-N-acetyl-alpha-D-glucosamine = di-trans,octa-cis-undecaprenyl diphospho-[N-acetyl-alpha-D-glucosaminyl-(1-&gt;4)]-N-acetyl-alpha-D-muramoyl-L-alanyl-D-glutamyl-meso-2,6-diaminopimeloyl-D-alanyl-D-alanine + UDP + H(+). It functions in the pathway cell wall biogenesis; peptidoglycan biosynthesis. Cell wall formation. Catalyzes the transfer of a GlcNAc subunit on undecaprenyl-pyrophosphoryl-MurNAc-pentapeptide (lipid intermediate I) to form undecaprenyl-pyrophosphoryl-MurNAc-(pentapeptide)GlcNAc (lipid intermediate II). The polypeptide is UDP-N-acetylglucosamine--N-acetylmuramyl-(pentapeptide) pyrophosphoryl-undecaprenol N-acetylglucosamine transferase (Neisseria meningitidis serogroup C / serotype 2a (strain ATCC 700532 / DSM 15464 / FAM18)).